The following is a 107-amino-acid chain: Latency-related protein 2 (107 aa).

Residues 1–44 are compositionally biased toward pro residues; sequence MAPPLPRTPTPTHPHSHAPPLPRTPTPAHPHSHAPPLPRTPTPT. The tract at residues 1-63 is disordered; that stretch reads MAPPLPRTPT…SIQHRQGKDT (63 aa). 3 repeat units span residues 2–17, 18–33, and 34–49. The segment at 2 to 49 is 3 X 17 AA tandem repeats; sequence APPLPRTPTPTHPHSHAPPLPRTPTPAHPHSHAPPLPRTPTPTHPHSH. Positions 46–58 are enriched in basic residues; that stretch reads PHSHAPPRSIQHR.

The chain is Latency-related protein 2 from Homo sapiens (Human).